Consider the following 196-residue polypeptide: Ribose 1,5-bisphosphate phosphokinase PhnN (196 aa).

Belongs to the ribose 1,5-bisphosphokinase family.

It catalyses the reaction alpha-D-ribose 1,5-bisphosphate + ATP = 5-phospho-alpha-D-ribose 1-diphosphate + ADP. It participates in metabolic intermediate biosynthesis; 5-phospho-alpha-D-ribose 1-diphosphate biosynthesis; 5-phospho-alpha-D-ribose 1-diphosphate from D-ribose 5-phosphate (route II): step 3/3. In terms of biological role, catalyzes the phosphorylation of ribose 1,5-bisphosphate to 5-phospho-D-ribosyl alpha-1-diphosphate (PRPP). The chain is Ribose 1,5-bisphosphate phosphokinase PhnN from Psychromonas ingrahamii (strain DSM 17664 / CCUG 51855 / 37).